Reading from the N-terminus, the 368-residue chain is Phosphate acyltransferase (368 aa).

A disordered region spans residues 334–368; that stretch reads AAPLGESGRDANGAGQASPSAGQPAEPSAALSSKT.

Belongs to the PlsX family. In terms of assembly, homodimer. Probably interacts with PlsY.

It localises to the cytoplasm. It carries out the reaction a fatty acyl-[ACP] + phosphate = an acyl phosphate + holo-[ACP]. Its pathway is lipid metabolism; phospholipid metabolism. Catalyzes the reversible formation of acyl-phosphate (acyl-PO(4)) from acyl-[acyl-carrier-protein] (acyl-ACP). This enzyme utilizes acyl-ACP as fatty acyl donor, but not acyl-CoA. The protein is Phosphate acyltransferase of Burkholderia pseudomallei (strain 1106a).